We begin with the raw amino-acid sequence, 518 residues long: Integrator complex subunit 14 (518 aa).

The region spanning 2–204 is the VWFA domain; the sequence is PTVVVMDVSL…KNVQSMFGKL (203 aa). Residues Ser10, Ser12, and Thr86 each coordinate Mg(2+). N6-acetyllysine is present on Lys418.

This sequence belongs to the Integrator subunit 14 family. As to quaternary structure, component of the Integrator complex, composed of core subunits INTS1, INTS2, INTS3, INTS4, INTS5, INTS6, INTS7, INTS8, INTS9/RC74, INTS10, INTS11/CPSF3L, INTS12, INTS13, INTS14 and INTS15. The core complex associates with protein phosphatase 2A subunits PPP2CA and PPP2R1A, to form the Integrator-PP2A (INTAC) complex. INTS14 is part of the tail subcomplex, composed of INTS10, INTS13, INTS14 and INTS15. As to expression, strongly expressed in numerous cancer cells compared with their non-cancerous counterparts (lung, prostate, colon, stomach and skin).

The protein resides in the nucleus. Component of the integrator complex, a multiprotein complex that terminates RNA polymerase II (Pol II) transcription in the promoter-proximal region of genes. The integrator complex provides a quality checkpoint during transcription elongation by driving premature transcription termination of transcripts that are unfavorably configured for transcriptional elongation: the complex terminates transcription by (1) catalyzing dephosphorylation of the C-terminal domain (CTD) of Pol II subunit POLR2A/RPB1 and SUPT5H/SPT5, (2) degrading the exiting nascent RNA transcript via endonuclease activity and (3) promoting the release of Pol II from bound DNA. The integrator complex is also involved in terminating the synthesis of non-coding Pol II transcripts, such as enhancer RNAs (eRNAs), small nuclear RNAs (snRNAs), telomerase RNAs and long non-coding RNAs (lncRNAs). Within the integrator complex, INTS14 is part of the integrator tail module that acts as a platform for the recruitment of transcription factors at promoters. This Homo sapiens (Human) protein is Integrator complex subunit 14.